We begin with the raw amino-acid sequence, 215 residues long: Protein LURP-one-related 16 (215 aa).

A lipid anchor (N-myristoyl glycine) is attached at glycine 2.

The protein belongs to the LOR family.

In terms of biological role, might be related to the phospholipid scramblase and tubby-like superfamily of membrane tethered transcription factors. The chain is Protein LURP-one-related 16 from Arabidopsis thaliana (Mouse-ear cress).